Here is a 327-residue protein sequence, read N- to C-terminus: Olfactory receptor 226 (327 aa).

At 1-26 (MERRNHSGRVSEFVLLGFPAPAPLRV) the chain is on the extracellular side. Residue Asn-5 is glycosylated (N-linked (GlcNAc...) asparagine). The chain crosses the membrane as a helical span at residues 27-50 (LLFFLSLLAYVLVLTENMLIIIAI). The Cytoplasmic portion of the chain corresponds to 51 to 58 (RNHPTLHK). Residues 59 to 80 (PMYFFLANMSFLEIWYVTVTIP) traverse the membrane as a helical segment. At 81 to 104 (KMLAGFIGSKENHGQLISFEACMT) the chain is on the extracellular side. Cys-102 and Cys-194 are disulfide-bonded. The helical transmembrane segment at 105-125 (QLYFFLGLGCTECVLLAVMAY) threads the bilayer. At 126–144 (DRYVAICHPLHYPVIVSSR) the chain is on the cytoplasmic side. The helical transmembrane segment at 145-163 (LCVQMAAGSWAGGFGISMV) threads the bilayer. The Extracellular portion of the chain corresponds to 164–201 (KVFLISRLSYCGPNTINHFFCDVSPLLNLSCTDMSTAE). A helical membrane pass occupies residues 202-224 (LTDFVLAIFILLGPLSVTGASYM). Over 225-241 (AITGAVMRIPSAAGRHK) the chain is Cytoplasmic. A helical membrane pass occupies residues 242 to 265 (AFSTCASHLTVVIIFYAASIFIYA). At 266–277 (RPKALSAFDTNK) the chain is on the extracellular side. A helical membrane pass occupies residues 278–297 (LVSVLYAVIVPLFNPIIYCL). At 298-327 (RNQDVKRALRRTLHLAQDQEANTNKGSKNG) the chain is on the cytoplasmic side.

It belongs to the G-protein coupled receptor 1 family. As to expression, olfactory epithelium.

Its subcellular location is the cell membrane. In terms of biological role, odorant receptor. This chain is Olfactory receptor 226 (Olr226), found in Rattus norvegicus (Rat).